The primary structure comprises 317 residues: Acetyl-coenzyme A carboxylase carboxyl transferase subunit alpha (317 aa).

Residues 40–293 (LEGRVRDAMV…EAVIGDALKE (254 aa)) enclose the CoA carboxyltransferase C-terminal domain.

It belongs to the AccA family. As to quaternary structure, acetyl-CoA carboxylase is a heterohexamer composed of biotin carboxyl carrier protein (AccB), biotin carboxylase (AccC) and two subunits each of ACCase subunit alpha (AccA) and ACCase subunit beta (AccD).

Its subcellular location is the cytoplasm. The enzyme catalyses N(6)-carboxybiotinyl-L-lysyl-[protein] + acetyl-CoA = N(6)-biotinyl-L-lysyl-[protein] + malonyl-CoA. Its pathway is lipid metabolism; malonyl-CoA biosynthesis; malonyl-CoA from acetyl-CoA: step 1/1. Its function is as follows. Component of the acetyl coenzyme A carboxylase (ACC) complex. First, biotin carboxylase catalyzes the carboxylation of biotin on its carrier protein (BCCP) and then the CO(2) group is transferred by the carboxyltransferase to acetyl-CoA to form malonyl-CoA. This is Acetyl-coenzyme A carboxylase carboxyl transferase subunit alpha from Sinorhizobium medicae (strain WSM419) (Ensifer medicae).